Reading from the N-terminus, the 489-residue chain is UDP-N-acetylmuramoylalanine--D-glutamate ligase (489 aa).

Residue G126–T132 participates in ATP binding.

The protein belongs to the MurCDEF family.

Its subcellular location is the cytoplasm. The enzyme catalyses UDP-N-acetyl-alpha-D-muramoyl-L-alanine + D-glutamate + ATP = UDP-N-acetyl-alpha-D-muramoyl-L-alanyl-D-glutamate + ADP + phosphate + H(+). The protein operates within cell wall biogenesis; peptidoglycan biosynthesis. In terms of biological role, cell wall formation. Catalyzes the addition of glutamate to the nucleotide precursor UDP-N-acetylmuramoyl-L-alanine (UMA). The polypeptide is UDP-N-acetylmuramoylalanine--D-glutamate ligase (Mycolicibacterium paratuberculosis (strain ATCC BAA-968 / K-10) (Mycobacterium paratuberculosis)).